A 404-amino-acid chain; its full sequence is Lipase lipl-3 (404 aa).

The signal sequence occupies residues 1–20 (MCSSLCALLLVILAVHNVHA). Residue Asn-65 is glycosylated (N-linked (GlcNAc...) asparagine). The active-site Nucleophile is Ser-168. The N-linked (GlcNAc...) asparagine glycan is linked to Asn-272. Active-site charge relay system residues include Asp-344 and His-376.

Belongs to the AB hydrolase superfamily. Lipase family.

Its subcellular location is the secreted. It is found in the lysosome lumen. Functionally, lipase that, together with lipl-1, plays a role in the response to nutrient deprivation by controlling lipid metabolism. Specifically, involved in the breakdown of lipids during lipophagy, a process during which lipids contained in lipid droplets that have been delivered to lysosomes by autophagy are degraded. The sequence is that of Lipase lipl-3 from Caenorhabditis elegans.